A 466-amino-acid polypeptide reads, in one-letter code: 3-isopropylmalate dehydratase large subunit 1 (466 aa).

[4Fe-4S] cluster contacts are provided by cysteine 347, cysteine 407, and cysteine 410.

Belongs to the aconitase/IPM isomerase family. LeuC type 1 subfamily. Heterodimer of LeuC and LeuD. [4Fe-4S] cluster is required as a cofactor.

It carries out the reaction (2R,3S)-3-isopropylmalate = (2S)-2-isopropylmalate. The protein operates within amino-acid biosynthesis; L-leucine biosynthesis; L-leucine from 3-methyl-2-oxobutanoate: step 2/4. Its function is as follows. Catalyzes the isomerization between 2-isopropylmalate and 3-isopropylmalate, via the formation of 2-isopropylmaleate. The chain is 3-isopropylmalate dehydratase large subunit 1 from Salmonella choleraesuis (strain SC-B67).